Here is a 387-residue protein sequence, read N- to C-terminus: 3-ketoacyl-CoA thiolase (387 aa).

C91 functions as the Acyl-thioester intermediate in the catalytic mechanism. Catalysis depends on proton acceptor residues H343 and C373.

Belongs to the thiolase-like superfamily. Thiolase family. Heterotetramer of two alpha chains (FadB) and two beta chains (FadA).

The protein localises to the cytoplasm. It catalyses the reaction an acyl-CoA + acetyl-CoA = a 3-oxoacyl-CoA + CoA. It functions in the pathway lipid metabolism; fatty acid beta-oxidation. In terms of biological role, catalyzes the final step of fatty acid oxidation in which acetyl-CoA is released and the CoA ester of a fatty acid two carbons shorter is formed. The sequence is that of 3-ketoacyl-CoA thiolase from Escherichia coli (strain UTI89 / UPEC).